The primary structure comprises 1036 residues: DNA-directed RNA polymerase subunit beta (1036 aa).

It belongs to the RNA polymerase beta chain family. In terms of assembly, in plastids the minimal PEP RNA polymerase catalytic core is composed of four subunits: alpha, beta, beta', and beta''. When a (nuclear-encoded) sigma factor is associated with the core the holoenzyme is formed, which can initiate transcription.

The protein localises to the plastid. It localises to the chloroplast. It catalyses the reaction RNA(n) + a ribonucleoside 5'-triphosphate = RNA(n+1) + diphosphate. In terms of biological role, DNA-dependent RNA polymerase catalyzes the transcription of DNA into RNA using the four ribonucleoside triphosphates as substrates. The chain is DNA-directed RNA polymerase subunit beta from Cyanidioschyzon merolae (strain NIES-3377 / 10D) (Unicellular red alga).